Here is an 857-residue protein sequence, read N- to C-terminus: Bifunctional uridylyltransferase/uridylyl-removing enzyme (857 aa).

The segment at 1-322 (MDTTPELLLC…FPSESMVTRE (322 aa)) is uridylyltransferase. The segment at 323–679 (INDRFVERQG…ARISPAGEGL (357 aa)) is uridylyl-removing. Residues 441–563 (VDQHILMVVR…VGNGRYLTAL (123 aa)) enclose the HD domain. 2 ACT domains span residues 680-760 (QVAV…DPTQ) and 788-857 (LLSV…ALAI).

This sequence belongs to the GlnD family. Mg(2+) serves as cofactor.

The catalysed reaction is [protein-PII]-L-tyrosine + UTP = [protein-PII]-uridylyl-L-tyrosine + diphosphate. It catalyses the reaction [protein-PII]-uridylyl-L-tyrosine + H2O = [protein-PII]-L-tyrosine + UMP + H(+). Its activity is regulated as follows. Uridylyltransferase (UTase) activity is inhibited by glutamine, while glutamine activates uridylyl-removing (UR) activity. Functionally, modifies, by uridylylation and deuridylylation, the PII regulatory proteins (GlnB and homologs), in response to the nitrogen status of the cell that GlnD senses through the glutamine level. Under low glutamine levels, catalyzes the conversion of the PII proteins and UTP to PII-UMP and PPi, while under higher glutamine levels, GlnD hydrolyzes PII-UMP to PII and UMP (deuridylylation). Thus, controls uridylylation state and activity of the PII proteins, and plays an important role in the regulation of nitrogen assimilation and metabolism. This Cupriavidus metallidurans (strain ATCC 43123 / DSM 2839 / NBRC 102507 / CH34) (Ralstonia metallidurans) protein is Bifunctional uridylyltransferase/uridylyl-removing enzyme.